Consider the following 149-residue polypeptide: Transcription factor bHLH153 (149 aa).

Residues 27-76 (RHKSDLSFSSKERKDKVGERISALQQIVSPYGKTDTASVLLDAMHYIEFL) form the bHLH domain.

This sequence belongs to the bHLH protein family.

It localises to the nucleus. The chain is Transcription factor bHLH153 from Arabidopsis thaliana (Mouse-ear cress).